A 311-amino-acid chain; its full sequence is MANPLYHKHIISINDLSRDELELVLRTAASLKKTPQPELLKHKVIASCFFEASTRTRLSFETSIHRLGASVVGFSDSSNTSLGKKGETLADTMSVISTYVDAIVMRHPQEGASRLAAQFSGNVPIVNAGDGANQHPTQTLLDLFTIQETQGRLDNINIAMVGDLKYGRTVHSLTQALAKFNGNRFFFIAPDALAMPAYILQMLEEKEIEYSLHESLEEVVPELDILYMTRVQKERLDPSEYANVKAQFILRSSDLTGARDNLKVLHPLPRIDEITTDVDKTPYAYYFQQAGNGIFARQALLALVLNAELAL.

Positions 55 and 56 each coordinate carbamoyl phosphate. K85 contributes to the L-aspartate binding site. Residues R106, H135, and Q138 each coordinate carbamoyl phosphate. Residues R168 and R230 each contribute to the L-aspartate site. 2 residues coordinate carbamoyl phosphate: L268 and P269.

Belongs to the aspartate/ornithine carbamoyltransferase superfamily. ATCase family. As to quaternary structure, heterododecamer (2C3:3R2) of six catalytic PyrB chains organized as two trimers (C3), and six regulatory PyrI chains organized as three dimers (R2).

The enzyme catalyses carbamoyl phosphate + L-aspartate = N-carbamoyl-L-aspartate + phosphate + H(+). The protein operates within pyrimidine metabolism; UMP biosynthesis via de novo pathway; (S)-dihydroorotate from bicarbonate: step 2/3. In terms of biological role, catalyzes the condensation of carbamoyl phosphate and aspartate to form carbamoyl aspartate and inorganic phosphate, the committed step in the de novo pyrimidine nucleotide biosynthesis pathway. The sequence is that of Aspartate carbamoyltransferase catalytic subunit from Yersinia pseudotuberculosis serotype O:1b (strain IP 31758).